Consider the following 930-residue polypeptide: Protein translocase subunit SecA (930 aa).

ATP contacts are provided by residues Q87, 105–109, and D515; that span reads GEGKT. Zn(2+) is bound by residues C914, C916, C925, and H926.

Belongs to the SecA family. In terms of assembly, monomer and homodimer. Part of the essential Sec protein translocation apparatus which comprises SecA, SecYEG and auxiliary proteins SecDF-YajC and YidC. The cofactor is Zn(2+).

It localises to the cell inner membrane. The protein localises to the cytoplasm. It carries out the reaction ATP + H2O + cellular proteinSide 1 = ADP + phosphate + cellular proteinSide 2.. Functionally, part of the Sec protein translocase complex. Interacts with the SecYEG preprotein conducting channel. Has a central role in coupling the hydrolysis of ATP to the transfer of proteins into and across the cell membrane, serving both as a receptor for the preprotein-SecB complex and as an ATP-driven molecular motor driving the stepwise translocation of polypeptide chains across the membrane. The polypeptide is Protein translocase subunit SecA (Burkholderia vietnamiensis (strain G4 / LMG 22486) (Burkholderia cepacia (strain R1808))).